The following is a 339-amino-acid chain: UDP-N-acetylglucosamine--N-acetylmuramyl-(pentapeptide) pyrophosphoryl-undecaprenol N-acetylglucosamine transferase (339 aa).

UDP-N-acetyl-alpha-D-glucosamine-binding positions include 11 to 13 (TGG), Asn-127, Arg-170, Ser-188, Ile-235, and Gln-280.

The protein belongs to the glycosyltransferase 28 family. MurG subfamily.

The protein resides in the cell inner membrane. It carries out the reaction di-trans,octa-cis-undecaprenyl diphospho-N-acetyl-alpha-D-muramoyl-L-alanyl-D-glutamyl-meso-2,6-diaminopimeloyl-D-alanyl-D-alanine + UDP-N-acetyl-alpha-D-glucosamine = di-trans,octa-cis-undecaprenyl diphospho-[N-acetyl-alpha-D-glucosaminyl-(1-&gt;4)]-N-acetyl-alpha-D-muramoyl-L-alanyl-D-glutamyl-meso-2,6-diaminopimeloyl-D-alanyl-D-alanine + UDP + H(+). It functions in the pathway cell wall biogenesis; peptidoglycan biosynthesis. Functionally, cell wall formation. Catalyzes the transfer of a GlcNAc subunit on undecaprenyl-pyrophosphoryl-MurNAc-pentapeptide (lipid intermediate I) to form undecaprenyl-pyrophosphoryl-MurNAc-(pentapeptide)GlcNAc (lipid intermediate II). The protein is UDP-N-acetylglucosamine--N-acetylmuramyl-(pentapeptide) pyrophosphoryl-undecaprenol N-acetylglucosamine transferase of Thermotoga sp. (strain RQ2).